The primary structure comprises 194 residues: MRQAETARKTNETNISLTLEIDGEGKADIQTDVPFMTHMLDLFTKHGHFNLTVDAKGDTDVDDHHTTEDIGIVLGQMFKEALGDKKGIKRYGSSFVPMDETLAQVVVDLSNRPHLEMRAAFPSQKVGTFDTELVHEFLWKFALEARINLHVIVHYGTNTHHMIEAIFKAMARALDEATTIDPRVKGIPSTKGML.

The protein belongs to the imidazoleglycerol-phosphate dehydratase family.

It is found in the cytoplasm. It catalyses the reaction D-erythro-1-(imidazol-4-yl)glycerol 3-phosphate = 3-(imidazol-4-yl)-2-oxopropyl phosphate + H2O. The protein operates within amino-acid biosynthesis; L-histidine biosynthesis; L-histidine from 5-phospho-alpha-D-ribose 1-diphosphate: step 6/9. The polypeptide is Imidazoleglycerol-phosphate dehydratase (Bacillus pumilus (strain SAFR-032)).